Consider the following 351-residue polypeptide: Putative glycosyltransferase 45 (351 aa).

This sequence belongs to the glycosyltransferase group 1 family.

This is Putative glycosyltransferase 45 (SIFV0045) from Sulfolobus islandicus filamentous virus (isolate Iceland/Hveragerdi) (SIFV).